The following is a 62-amino-acid chain: uncharacterized protein (62 aa).

The segment covering 1-13 (MGESKSPQESSSE) has biased composition (polar residues). The interval 1–62 (MGESKSPQES…SRREFRRKSG (62 aa)) is disordered. The segment covering 14–28 (GETKRKFREALDRKM) has biased composition (basic and acidic residues).

This is an uncharacterized protein from Mycobacterium tuberculosis (strain ATCC 25618 / H37Rv).